Consider the following 209-residue polypeptide: Large ribosomal subunit protein uL3 (209 aa).

An N5-methylglutamine modification is found at Q150.

This sequence belongs to the universal ribosomal protein uL3 family. As to quaternary structure, part of the 50S ribosomal subunit. Forms a cluster with proteins L14 and L19. In terms of processing, methylated by PrmB.

One of the primary rRNA binding proteins, it binds directly near the 3'-end of the 23S rRNA, where it nucleates assembly of the 50S subunit. This Salmonella paratyphi C (strain RKS4594) protein is Large ribosomal subunit protein uL3.